The primary structure comprises 361 residues: Holliday junction branch migration complex subunit RuvB (361 aa).

The disordered stretch occupies residues 1–25 (MSIHTDDFGQGGFAQGGFPPDKAPD). A large ATPase domain (RuvB-L) region spans residues 5-207 (TDDFGQGGFA…FGIVARLEFY (203 aa)). ATP-binding positions include L46, R47, G88, K91, T92, T93, 154–156 (EDY), R197, Y207, and R244. T92 is a Mg(2+) binding site. A small ATPAse domain (RuvB-S) region spans residues 208–278 (TAEELARIVR…LADRALAMLD (71 aa)). The interval 281-361 (PQGFDIMDRK…GLPVPGDDAS (81 aa)) is head domain (RuvB-H). DNA is bound by residues R336 and R341.

Belongs to the RuvB family. Homohexamer. Forms an RuvA(8)-RuvB(12)-Holliday junction (HJ) complex. HJ DNA is sandwiched between 2 RuvA tetramers; dsDNA enters through RuvA and exits via RuvB. An RuvB hexamer assembles on each DNA strand where it exits the tetramer. Each RuvB hexamer is contacted by two RuvA subunits (via domain III) on 2 adjacent RuvB subunits; this complex drives branch migration. In the full resolvosome a probable DNA-RuvA(4)-RuvB(12)-RuvC(2) complex forms which resolves the HJ.

It localises to the cytoplasm. The enzyme catalyses ATP + H2O = ADP + phosphate + H(+). The RuvA-RuvB-RuvC complex processes Holliday junction (HJ) DNA during genetic recombination and DNA repair, while the RuvA-RuvB complex plays an important role in the rescue of blocked DNA replication forks via replication fork reversal (RFR). RuvA specifically binds to HJ cruciform DNA, conferring on it an open structure. The RuvB hexamer acts as an ATP-dependent pump, pulling dsDNA into and through the RuvAB complex. RuvB forms 2 homohexamers on either side of HJ DNA bound by 1 or 2 RuvA tetramers; 4 subunits per hexamer contact DNA at a time. Coordinated motions by a converter formed by DNA-disengaged RuvB subunits stimulates ATP hydrolysis and nucleotide exchange. Immobilization of the converter enables RuvB to convert the ATP-contained energy into a lever motion, pulling 2 nucleotides of DNA out of the RuvA tetramer per ATP hydrolyzed, thus driving DNA branch migration. The RuvB motors rotate together with the DNA substrate, which together with the progressing nucleotide cycle form the mechanistic basis for DNA recombination by continuous HJ branch migration. Branch migration allows RuvC to scan DNA until it finds its consensus sequence, where it cleaves and resolves cruciform DNA. The sequence is that of Holliday junction branch migration complex subunit RuvB from Delftia acidovorans (strain DSM 14801 / SPH-1).